We begin with the raw amino-acid sequence, 388 residues long: MKWMVVAFICLQLLEATVVKVPLKKFKSIRETMKEKGLLWEFLKTHKHDPARKYRVSDLSVSYEPMDYMDAAYFGEISIGTPPQNFLVLFDTGSSNLWVPSVYCQSQACTSHSRFNPSASSTYSSNGQTFSLQYGSGSLTGFFGYDTLTVQSIQVPNQEFGLSENEPGTNFVYAQFDGIMGLAYPALSMGGATTAMQGMLQEGALTSPVFSFYLSNQQGSSGGAVIFGGVDSSLYTGQIYWAPVTQELYWQIGIEEFLIGGQASGWCSEGCQAIVDTGTSLLTVPQQYMSAFLEATGAQEDEYGQFLVNCDSIQNLPTLTFIINGVEFPLPPSSYILSNNGYCTVGVEPTYLSSQNSQPLWILGDVFLRSYYSVFDLGNNRVGFATAA.

Residues M1–A16 form the signal peptide. A propeptide spans T17 to L59 (activation peptide). In terms of domain architecture, Peptidase A1 spans Y73–A385. D91 is an active-site residue. 2 cysteine pairs are disulfide-bonded: C104-C109 and C267-C271. D276 is an active-site residue. Residues C310 and C343 are joined by a disulfide bond.

Belongs to the peptidase A1 family.

The protein localises to the secreted. It catalyses the reaction More restricted specificity than pepsin A, but shows preferential cleavage at Tyr-|-Xaa bonds. High activity on hemoglobin.. Its activity is regulated as follows. Inhibited by pepstatin. Functionally, hydrolyzes a variety of proteins. This is Gastricsin (PGC) from Callithrix jacchus (White-tufted-ear marmoset).